We begin with the raw amino-acid sequence, 356 residues long: Butyrate kinase 2 (356 aa).

Belongs to the acetokinase family. As to quaternary structure, homodimer.

The protein localises to the cytoplasm. It catalyses the reaction butanoate + ATP = butanoyl phosphate + ADP. It participates in lipid metabolism; butanoate metabolism. Functionally, catalyzes the conversion of butyryl-CoA through butyryl phosphate to butyrate. In Clostridium acetobutylicum (strain ATCC 824 / DSM 792 / JCM 1419 / IAM 19013 / LMG 5710 / NBRC 13948 / NRRL B-527 / VKM B-1787 / 2291 / W), this protein is Butyrate kinase 2 (buk2).